The following is a 444-amino-acid chain: tRNA-2-methylthio-N(6)-dimethylallyladenosine synthase (444 aa).

The 115-residue stretch at 3–117 (RGLYIESYGC…LPELIMKVKR (115 aa)) folds into the MTTase N-terminal domain. [4Fe-4S] cluster-binding residues include Cys12, Cys48, Cys80, Cys155, Cys159, and Cys162. The region spanning 141–374 (ANGGVSAYVS…LLTKQQLQFN (234 aa)) is the Radical SAM core domain. The 67-residue stretch at 375–441 (KSMEGRVMDV…QNSLEGTVLS (67 aa)) folds into the TRAM domain.

This sequence belongs to the methylthiotransferase family. MiaB subfamily. Monomer. Requires [4Fe-4S] cluster as cofactor.

It is found in the cytoplasm. It carries out the reaction N(6)-dimethylallyladenosine(37) in tRNA + (sulfur carrier)-SH + AH2 + 2 S-adenosyl-L-methionine = 2-methylsulfanyl-N(6)-dimethylallyladenosine(37) in tRNA + (sulfur carrier)-H + 5'-deoxyadenosine + L-methionine + A + S-adenosyl-L-homocysteine + 2 H(+). In terms of biological role, catalyzes the methylthiolation of N6-(dimethylallyl)adenosine (i(6)A), leading to the formation of 2-methylthio-N6-(dimethylallyl)adenosine (ms(2)i(6)A) at position 37 in tRNAs that read codons beginning with uridine. In Anaplasma phagocytophilum (strain HZ), this protein is tRNA-2-methylthio-N(6)-dimethylallyladenosine synthase.